A 279-amino-acid chain; its full sequence is Shikimate dehydrogenase (NADP(+)) (279 aa).

Residues 20–22 and T67 contribute to the shikimate site; that span reads SRS. K71 acts as the Proton acceptor in catalysis. An NADP(+)-binding site is contributed by D83. 2 residues coordinate shikimate: N92 and D108. NADP(+)-binding positions include 134 to 138 and L223; that span reads GAGGA. Y225 serves as a coordination point for shikimate. G246 contacts NADP(+).

The protein belongs to the shikimate dehydrogenase family. In terms of assembly, homodimer.

It catalyses the reaction shikimate + NADP(+) = 3-dehydroshikimate + NADPH + H(+). It participates in metabolic intermediate biosynthesis; chorismate biosynthesis; chorismate from D-erythrose 4-phosphate and phosphoenolpyruvate: step 4/7. Involved in the biosynthesis of the chorismate, which leads to the biosynthesis of aromatic amino acids. Catalyzes the reversible NADPH linked reduction of 3-dehydroshikimate (DHSA) to yield shikimate (SA). The polypeptide is Shikimate dehydrogenase (NADP(+)) (Cereibacter sphaeroides (strain ATCC 17029 / ATH 2.4.9) (Rhodobacter sphaeroides)).